The primary structure comprises 797 residues: Peroxisome proliferator-activated receptor gamma coactivator 1-alpha (797 aa).

The residue at position 77 (Lys-77) is an N6-acetyllysine. The segment at 101-138 is disordered; it reads EDGLPSFDALTDGAVTTDNEASPSSMPDGTPPPQEAEE. A compositionally biased stretch (polar residues) spans 114–127; that stretch reads AVTTDNEASPSSMP. The LXXLL motif motif lies at 142–146; the sequence is LKKLL. An N6-acetyllysine modification is found at Lys-144. Thr-177 carries the phosphothreonine; by AMPK modification. N6-acetyllysine is present on Lys-183. The disordered stretch occupies residues 212 to 276; the sequence is YLTTNDDPPH…NDPKGSPFEN (65 aa). Basic and acidic residues predominate over residues 218 to 236; sequence DPPHTKPTENRNSSRDKCA. Polar residues predominate over residues 243–259; sequence TQPQSQHAQAKPTTLSL. Residues Lys-253, Lys-270, Lys-277, Lys-320, Lys-346, Lys-412, Lys-441, and Lys-450 each carry the N6-acetyllysine modification. A disordered region spans residues 289 to 376; the sequence is GTAGLTPPTT…HEERKTKRPS (88 aa). Residues 292–338 are interaction with PPARG; that stretch reads GLTPPTTPPHKANQDNPFKASPKLKPSCKTVVPPPTKRARYSECSGT. The tract at residues 349-797 is mediates interaction with RNF34; it reads EQSELYAQLS…LKEAQRSLRR (449 aa). A Phosphoserine; by AMPK modification is found at Ser-538. Disordered regions lie at residues 543 to 598, 612 to 634, and 648 to 668; these read NSPC…SSRS, HRNS…PRYD, and EYRK…ERQK. Positions 562–577 are enriched in basic residues; it reads QRMRSRSRSFSRHRSC. A compositionally biased stretch (low complexity) spans 578-598; it reads SRSPYSRSRSRSPGSRSSSRS. Over residues 621–630 the composition is skewed to basic residues; the sequence is SRSRSPYSRR. The region spanning 676 to 752 is the RRM domain; that stretch reads RVIYVGKIRP…TDFELYFCGR (77 aa). Lys-757 and Lys-778 each carry N6-acetyllysine.

As to quaternary structure, homooligomer. Interacts with MYBBP1A; inhibits MYBBP1A transcriptional activation. Interacts with PRDM16, LPIN1 and PML. Interacts (via LXXLL motif) with RORA and RORC (via AF-2 motif); activates RORA and RORC transcriptional activation. Interacts with LRPPRC. Interacts with FOXO1. Interacts with NR5A2. Post-translationally, phosphorylation by AMPK in skeletal muscle increases activation of its own promoter. Phosphorylated by CLK2. In terms of processing, heavily acetylated by KAT2A/GCN5 under conditions of high nutrients, leading to inactivation of PPARGC1A. Deacetylated by SIRT1 in low nutrients/high NAD conditions, leading to its activation. Ubiquitinated. Ubiquitination by RNF34 induces proteasomal degradation. White quadriceps and red tibialis anterior (TA) muscles, liver, kidney and brown adipose tissue (at protein level). Skeletal muscle, brown adipose tissue, heart, kidney and brain.

It is found in the nucleus. It localises to the PML body. In terms of biological role, transcriptional coactivator for steroid receptors and nuclear receptors. Greatly increases the transcriptional activity of PPARG and thyroid hormone receptor on the uncoupling protein promoter. Can regulate key mitochondrial genes that contribute to the program of adaptive thermogenesis. Plays an essential role in metabolic reprogramming in response to dietary availability through coordination of the expression of a wide array of genes involved in glucose and fatty acid metabolism. Acts as a key regulator of gluconeogenesis: stimulates hepatic gluconeogenesis by increasing the expression of gluconeogenic enzymes, and acting together with FOXO1 to promote the fasting gluconeogenic program. Induces the expression of PERM1 in the skeletal muscle in an ESRRA-dependent manner. Also involved in the integration of the circadian rhythms and energy metabolism. Required for oscillatory expression of clock genes, such as BMAL1 and NR1D1, through the coactivation of RORA and RORC, and metabolic genes, such as PDK4 and PEPCK. In Mus musculus (Mouse), this protein is Peroxisome proliferator-activated receptor gamma coactivator 1-alpha (Ppargc1a).